Consider the following 208-residue polypeptide: Probable hydrolase YcaC (208 aa).

C118 is an active-site residue.

In terms of assembly, homooctamer composed of two tetrameric rings.

The sequence is that of Probable hydrolase YcaC (ycaC) from Escherichia coli (strain K12).